A 31-amino-acid chain; its full sequence is Cycloviolacin-O25 (31 aa).

A cross-link (cyclopeptide (Asp-Asn)) is located at residues 1 to 31 (DIFCGETCAFIPCITHVPGTCSCKSKVCYFN). 3 cysteine pairs are disulfide-bonded: C4-C21, C8-C23, and C13-C28.

This is a cyclic peptide. In terms of tissue distribution, expressed in roots and runners but not in leaves, petals and petioles (at protein level).

Probably participates in a plant defense mechanism. This chain is Cycloviolacin-O25, found in Viola odorata (Sweet violet).